Consider the following 652-residue polypeptide: Inactive leucine-rich repeat receptor-like serine/threonine-protein kinase At1g60630 (652 aa).

The signal sequence occupies residues 1 to 23; sequence MISSSSCMFFLVFAFFLISPVRS. At 24 to 256 the chain is on the extracellular side; the sequence is SDVEALLSLK…SRTKLIGIIS (233 aa). LRR repeat units follow at residues 64–84, 85–108, 109–132, 134–156, 158–178, and 179–203; these read SKLV…SLNQ, LDQL…LSGL, VNLK…LTSL, RLKT…LLRL, RLYT…PLNQ, and ATLR…ALNR. N-linked (GlcNAc...) asparagine glycosylation is found at Asn-72, Asn-104, and Asn-120. Residues Asn-185, Asn-205, and Asn-225 are each glycosylated (N-linked (GlcNAc...) asparagine). A helical membrane pass occupies residues 257-277; that stretch reads GSICGGILILLLTFLLICLLW. Over 278–652 the chain is Cytoplasmic; it reads RRKRSKSKRE…SLPREDHMSI (375 aa). The tract at residues 286-321 is disordered; that stretch reads REERRSKRVAESKEAKTAETEEGTSDQKNKRFSWEK. The Protein kinase domain occupies 350-624; that stretch reads KASAETLGRG…VKDARAEAAL (275 aa). Phosphoserine is present on Ser-352. Residues 356–364 and Lys-378 each bind ATP; that span reads LGRGTLGST. A phosphoserine mark is found at Ser-430 and Ser-433. Thr-509 is modified (phosphothreonine). A disordered region spans residues 630–652; that stretch reads SDHSPGRWSDTIQSLPREDHMSI.

The protein belongs to the protein kinase superfamily. Ser/Thr protein kinase family.

It is found in the cell membrane. The sequence is that of Inactive leucine-rich repeat receptor-like serine/threonine-protein kinase At1g60630 from Arabidopsis thaliana (Mouse-ear cress).